A 37-amino-acid chain; its full sequence is Large ribosomal subunit protein bL36 (37 aa).

This sequence belongs to the bacterial ribosomal protein bL36 family.

This is Large ribosomal subunit protein bL36 from Synechococcus elongatus (strain ATCC 33912 / PCC 7942 / FACHB-805) (Anacystis nidulans R2).